The sequence spans 1485 residues: MNEPPPKRQSVFAKGMKKLQRSKSLLNFAEQAKPPTPENFSSLDPKSNLNSIGLSLVGYGLSSDHLPPPRLDTDSESVSSRTSSPTLHVTTKFNPKQRVESFQTATNFKNQIPPEEIVDQLFEKLLSIRVFPDEAVYSLKKQPVERKWELLLREHETNHHFDLKKLSEQATDKFLTNRDRFQEHEFLIMSRSTTQEPKPKLKPLRIVSGGEDYDDEETPTVTKLVHDDSSTSKLSIESGGSSGAPTETESLLGLVNKKLKIRDGSPDWYVSRIMANKLSLKDCKKLERKLVENNVVKNSGVTWTQGFINAQGETALSVVLTKINKKSIKSNEEFDKEYLIVKCLKHINSEKRDETSSLKEKVYVVKALVFLLVSPRLTTRILVTEVLVMLMLLRDKTLWKSALDGLSSLQDRNGDYVIFQPWLNAFEETIIKYSWSQNKAGELSNLKNYATITLILINSMVDMCSSLKRRISIRRDFGNARILNIFEKLAQIEDTRIDNEIEKYEMYAEEDYNEYVEGKKKRNSKQLPNIPQSKLKLLQVSDFVTTPEANTSLEEDELTPELEDNLSGTESSFDEKSFMTKLKEAEDIESDGAMKSVLQRLMKLKQSERSTEDVHKMLVLVDSMLQHVTNESRVIGTDAHSVLNITIQKLMDRLSTEDMARRAVAESKMLSRQLELVKEEKELLEKELETNKIETIRELKKENYYQAELIATQERQLSKLQQKIEQLQSPNNTALPVVDVGQQGFGNGTVASLKDTSSSSPSKRPPTPPGLYSMQKGSLRGGISAPPMLDFKDARPVSDLQDSRPVSDLQDAPRLVESSAPPLPESKDPVAQPPPPESKDSVAPPPPPVPDFIKSAAPPPPPLPGFMNASAPPPPPVPEFIKSSAPPPPPLPGFITTTPPPPPPLPGFITTTPPPPPMPGMLQPGKVKELGTLFKEKHKQEPQKGITKTKADVVPSIRPKNKLKQMHWDKLENIEKTFWNNLEDSVLSNKLIEQGVLGEVEQVFAAKTATIKKKTAVESQQQPTKKSFLSRDLSQQFGINLHMFANLSEEKLVLKVLRCNSEILENHSVLEFFNNEALVELSDSLFRNLAPYSTDPRTRKKPMKNPEELERADRIFLELCYNLRHYWRSRSRALLFSQTYKKDYIDLMRKLNIVDEANAALKKSESLQNVLGIIRTVGNFMNDDAKQALGFKLDTLQRLKFMKDDQNSMTFLHYIEKIVRHSFPEYGSFVDDLNVLSTLHNISIEQLETDCEEMSRSVKNITDSLERGKLSNKKDLHPEDRILTTISSPMLNAKNKNAMLQSHLKRTAGELNSLMTFFGENPKDATARNTFFYKFVTFITEYKKAHVENIQREEEQRTYEIRKKILEDKIAKKEKLKEESAEPEAVVDTAEESSAVIDSLLEKLKSSTPITTNRAKTKNRRSKALSFYSENPLEIVADTKYESVNNLKRRMTTRKRTTDGETSPKSEQFMSRAQAMLHQLRNKEE.

Disordered stretches follow at residues 65 to 88, 226 to 248, and 549 to 575; these read HLPPPRLDTDSESVSSRTSSPTLH, HDDSSTSKLSIESGGSSGAPTET, and ANTSLEEDELTPELEDNLSGTESSFDE. In terms of domain architecture, GBD/FH3 spans 110 to 636; that stretch reads NQIPPEEIVD…HVTNESRVIG (527 aa). The segment covering 231–248 has biased composition (polar residues); sequence TSKLSIESGGSSGAPTET. Acidic residues predominate over residues 553–564; that stretch reads LEEDELTPELED. A coiled-coil region spans residues 660-734; that stretch reads ARRAVAESKM…EQLQSPNNTA (75 aa). Residues 746-874 are disordered; that stretch reads GNGTVASLKD…GFMNASAPPP (129 aa). The region spanning 953-1368 is the FH2 domain; that stretch reads VVPSIRPKNK…YEIRKKILED (416 aa). Coiled-coil stretches lie at residues 1240 to 1312 and 1351 to 1382; these read HNIS…GELN and QREEEQRTYEIRKKILEDKIAKKEKLKEESAE. The disordered stretch occupies residues 1447-1471; the sequence is LKRRMTTRKRTTDGETSPKSEQFMS.

Belongs to the formin homology family. BNI1 subfamily. Interacts with IQG1.

Its subcellular location is the bud neck. The protein localises to the cell septum. Its function is as follows. May organize microtubules by mediating spindle positioning and movement in the budding process. Required for cytokinesis and the maintenance of polarized hyphal growth. The sequence is that of Formin BNR1 (BNR1) from Candida albicans (strain SC5314 / ATCC MYA-2876) (Yeast).